Here is a 262-residue protein sequence, read N- to C-terminus: WW domain-binding protein 2 (262 aa).

Residues 1–84 (MALNKNHSEG…YLMKDCEVKQ (84 aa)) form the GRAM domain. Tyr-192 bears the Phosphotyrosine mark. The PPxY motif 1 motif lies at 196–200 (PPPPY). Residues 197–206 (PPPYPGPMEP) are compositionally biased toward pro residues. A disordered region spans residues 197–262 (PPPYPGPMEP…YYPPEDKKTQ (66 aa)). The span at 219–231 (AAEAKAAEAAASA) shows a compositional bias: low complexity. Tyr-232 carries the phosphotyrosine modification. The span at 246–255 (SQPPPPPYYP) shows a compositional bias: pro residues. The PPxY motif 2 motif lies at 249–253 (PPPPY).

In terms of assembly, binds to the WW domain of YAP1, WWP1 and WWP2. Interacts with NEDD4. Interacts with ESR1 and UBE3A. In terms of processing, phosphorylated in repsonse to EGF as well as estrogen and progesterone hormones. Tyr-192 and Tyr-232 are phosphorylated by YES and SRC inducing nuclear translocation.

It localises to the cytoplasm. The protein localises to the nucleus. Its function is as follows. Acts as a transcriptional coactivator of estrogen and progesterone receptors (ESR1 and PGR) upon hormone activation. In presence of estrogen, binds to ESR1-responsive promoters. Synergizes with YAP1 to enhance PGR activity. Modulates expression of post-synaptic scaffolding proteins via regulation of ESR1, ESR2 and PGR. The chain is WW domain-binding protein 2 (Wbp2) from Rattus norvegicus (Rat).